The sequence spans 486 residues: Glutamyl-tRNA(Gln) amidotransferase subunit A (486 aa).

Catalysis depends on charge relay system residues K78 and S153. S177 functions as the Acyl-ester intermediate in the catalytic mechanism.

It belongs to the amidase family. GatA subfamily. Heterotrimer of A, B and C subunits.

It carries out the reaction L-glutamyl-tRNA(Gln) + L-glutamine + ATP + H2O = L-glutaminyl-tRNA(Gln) + L-glutamate + ADP + phosphate + H(+). Functionally, allows the formation of correctly charged Gln-tRNA(Gln) through the transamidation of misacylated Glu-tRNA(Gln) in organisms which lack glutaminyl-tRNA synthetase. The reaction takes place in the presence of glutamine and ATP through an activated gamma-phospho-Glu-tRNA(Gln). The sequence is that of Glutamyl-tRNA(Gln) amidotransferase subunit A from Syntrophobacter fumaroxidans (strain DSM 10017 / MPOB).